Consider the following 248-residue polypeptide: Tryptophan synthase alpha chain (248 aa).

Catalysis depends on proton acceptor residues glutamate 36 and aspartate 47.

This sequence belongs to the TrpA family. As to quaternary structure, tetramer of two alpha and two beta chains.

The enzyme catalyses (1S,2R)-1-C-(indol-3-yl)glycerol 3-phosphate + L-serine = D-glyceraldehyde 3-phosphate + L-tryptophan + H2O. It participates in amino-acid biosynthesis; L-tryptophan biosynthesis; L-tryptophan from chorismate: step 5/5. Its function is as follows. The alpha subunit is responsible for the aldol cleavage of indoleglycerol phosphate to indole and glyceraldehyde 3-phosphate. This is Tryptophan synthase alpha chain from Pyrococcus abyssi (strain GE5 / Orsay).